The primary structure comprises 247 residues: Chalcone--flavanone isomerase (247 aa).

Substrate is bound by residues Thr56, Asn121, and Ser198. Basic and acidic residues predominate over residues 223 to 235 (ENKVEEDATKTDQ). The segment at 223 to 247 (ENKVEEDATKTDQEEANDLSLAKEN) is disordered.

Belongs to the chalcone isomerase family.

It carries out the reaction a chalcone = a flavanone.. It functions in the pathway secondary metabolite biosynthesis; flavonoid biosynthesis. Functionally, catalyzes the intramolecular cyclization of bicyclic chalcones into tricyclic (S)-flavanones. Responsible for the isomerization of 4,2',4',6'-tetrahydroxychalcone (also termed chalcone) into naringenin. This chain is Chalcone--flavanone isomerase (CHI), found in Raphanus sativus (Radish).